We begin with the raw amino-acid sequence, 593 residues long: Putative auxin response factor 15 (593 aa).

A DNA-binding region (TF-B3) is located at residues 126-228; it reads FTKVLTASDI…ELRVGIRRAR (103 aa). In terms of domain architecture, PB1 spans 511–592; the sequence is RTCTKVQMQG…MVKRIYIQKR (82 aa).

Belongs to the ARF family. As to quaternary structure, homodimers and heterodimers.

The protein localises to the nucleus. In terms of biological role, auxin response factors (ARFs) are transcriptional factors that bind specifically to the DNA sequence 5'-TGTCTC-3' found in the auxin-responsive promoter elements (AuxREs). Could act as transcriptional activator or repressor. Formation of heterodimers with Aux/IAA proteins may alter their ability to modulate early auxin response genes expression. In Arabidopsis thaliana (Mouse-ear cress), this protein is Putative auxin response factor 15 (ARF15).